Consider the following 982-residue polypeptide: Serine/threonine-protein kinase PknD (982 aa).

Residues tyrosine 51 to leucine 342 enclose the Protein kinase domain. Residues isoleucine 57–valine 65 and lysine 80 each bind ATP. The active-site Proton acceptor is aspartate 186.

The protein belongs to the protein kinase superfamily. Ser/Thr protein kinase family. Post-translationally, autophosphorylated on serine and threonine residues.

It catalyses the reaction L-seryl-[protein] + ATP = O-phospho-L-seryl-[protein] + ADP + H(+). The enzyme catalyses L-threonyl-[protein] + ATP = O-phospho-L-threonyl-[protein] + ADP + H(+). In terms of biological role, together with the serine/threonine kinase Pkn1, may play a role in the specific interactions with host proteins during intracellular growth. The sequence is that of Serine/threonine-protein kinase PknD from Protochlamydia amoebophila (strain UWE25).